Reading from the N-terminus, the 682-residue chain is Potassium-transporting ATPase ATP-binding subunit (682 aa).

4 consecutive transmembrane segments (helical) span residues 34–54, 62–82, 219–239, and 254–274; these read PVMF…IAMA, ALFS…ANFA, IALT…TATL, and VLVA…LSAI. Asp307 (4-aspartylphosphate intermediate) is an active-site residue. Residues Asp344, Glu348, 377–384, and Lys395 contribute to the ATP site; that span reads FTAQSRMS. Asp518 and Asp522 together coordinate Mg(2+). The next 3 helical transmembrane spans lie at 588-608, 616-636, and 656-676; these read FAII…LNIM, AILS…PLAL, and IYGL…DLLL.

The protein belongs to the cation transport ATPase (P-type) (TC 3.A.3) family. Type IA subfamily. In terms of assembly, the system is composed of three essential subunits: KdpA, KdpB and KdpC.

Its subcellular location is the cell inner membrane. It catalyses the reaction K(+)(out) + ATP + H2O = K(+)(in) + ADP + phosphate + H(+). In terms of biological role, part of the high-affinity ATP-driven potassium transport (or Kdp) system, which catalyzes the hydrolysis of ATP coupled with the electrogenic transport of potassium into the cytoplasm. This subunit is responsible for energy coupling to the transport system and for the release of the potassium ions to the cytoplasm. The sequence is that of Potassium-transporting ATPase ATP-binding subunit from Escherichia coli O17:K52:H18 (strain UMN026 / ExPEC).